Reading from the N-terminus, the 203-residue chain is A-type ATP synthase subunit E (203 aa).

This sequence belongs to the V-ATPase E subunit family. In terms of assembly, has multiple subunits with at least A(3), B(3), C, D, E, F, H, I and proteolipid K(x).

The protein resides in the cell membrane. In terms of biological role, component of the A-type ATP synthase that produces ATP from ADP in the presence of a proton gradient across the membrane. This Methanococcus maripaludis (strain C6 / ATCC BAA-1332) protein is A-type ATP synthase subunit E.